Consider the following 300-residue polypeptide: Protease HtpX homolog (300 aa).

Transmembrane regions (helical) follow at residues 5–25 and 41–61; these read IFLL…FISL and TLFL…LAIS. His146 contributes to the Zn(2+) binding site. Glu147 is an active-site residue. Residue His150 participates in Zn(2+) binding. 2 consecutive transmembrane segments (helical) span residues 161 to 181 and 196 to 216; these read LLQG…GFFV and IGFY…ASII. Glu225 is a Zn(2+) binding site.

Belongs to the peptidase M48B family. Zn(2+) is required as a cofactor.

Its subcellular location is the cell inner membrane. The chain is Protease HtpX homolog from Methylacidiphilum infernorum (isolate V4) (Methylokorus infernorum (strain V4)).